We begin with the raw amino-acid sequence, 98 residues long: NADH-ubiquinone oxidoreductase chain 4L (98 aa).

A run of 3 helical transmembrane segments spans residues 1–21 (MMSI…GVLI), 28–48 (STLL…ALII), and 59–79 (APLI…ALLV).

Belongs to the complex I subunit 4L family. In terms of assembly, core subunit of respiratory chain NADH dehydrogenase (Complex I) which is composed of 45 different subunits.

It localises to the mitochondrion inner membrane. It carries out the reaction a ubiquinone + NADH + 5 H(+)(in) = a ubiquinol + NAD(+) + 4 H(+)(out). Its function is as follows. Core subunit of the mitochondrial membrane respiratory chain NADH dehydrogenase (Complex I) which catalyzes electron transfer from NADH through the respiratory chain, using ubiquinone as an electron acceptor. Part of the enzyme membrane arm which is embedded in the lipid bilayer and involved in proton translocation. This chain is NADH-ubiquinone oxidoreductase chain 4L (MT-ND4L), found in Lagostrophus fasciatus (Banded hare-wallaby).